Consider the following 592-residue polypeptide: BRCA1-associated protein (592 aa).

At Ser-52 the chain carries Phosphoserine. The disordered stretch occupies residues 78–124 (KSNPDELKTTVEERKSSEASPTAQRSKDHSKECINAAPDSPSKQLPD). Basic and acidic residues predominate over residues 80–94 (NPDELKTTVEERKSS). Phosphoserine is present on residues Ser-97, Ser-117, and Ser-119. An RING-type zinc finger spans residues 264-304 (CTVCLERMDESVNGILTTLCNHSFHSQCLQRWDDTTCPVCR). The UBP-type; degenerate zinc-finger motif lies at 301 to 393 (PVCRYCQTPE…GKIVQYECEG (93 aa)). Zn(2+) contacts are provided by Cys-317, Cys-320, Cys-329, Cys-332, Cys-337, His-344, His-348, and His-354. Residues 429–537 (RIEKDTAEEI…EIQEQLRDVM (109 aa)) adopt a coiled-coil conformation. Residues 565–592 (AMASASSPASSGGSGKLPSRKGRSKRGK) are disordered. The segment covering 582–592 (PSRKGRSKRGK) has biased composition (basic residues).

In terms of assembly, interacts with the nuclear localization signal of BRCA1 and with the N-terminal of KSR1. The C-terminal portion of BCRA1 interacts with DDB1. As to expression, expressed in breast epithelial cell lines.

Its subcellular location is the cytoplasm. It catalyses the reaction S-ubiquitinyl-[E2 ubiquitin-conjugating enzyme]-L-cysteine + [acceptor protein]-L-lysine = [E2 ubiquitin-conjugating enzyme]-L-cysteine + N(6)-ubiquitinyl-[acceptor protein]-L-lysine.. Its pathway is protein modification; protein ubiquitination. In terms of biological role, negatively regulates MAP kinase activation by limiting the formation of Raf/MEK complexes probably by inactivation of the KSR1 scaffold protein. Also acts as a Ras responsive E3 ubiquitin ligase that, on activation of Ras, is modified by auto-polyubiquitination resulting in the release of inhibition of Raf/MEK complex formation. May also act as a cytoplasmic retention protein with a role in regulating nuclear transport. This is BRCA1-associated protein from Homo sapiens (Human).